Reading from the N-terminus, the 365-residue chain is Neutral protease 2 homolog mep20 (365 aa).

The first 19 residues, 1–19 (MKVTILASAILALINGALA), serve as a signal peptide directing secretion. Positions 20 to 172 (LPANTPTLDV…PQAIKLLDRR (153 aa)) are excised as a propeptide. The N-linked (GlcNAc...) asparagine glycan is linked to N73. 2 disulfide bridges follow: C178–C249 and C256–C274. H299 provides a ligand contact to Zn(2+). E300 is an active-site residue. Zn(2+)-binding residues include H303 and D314. Residue N351 is glycosylated (N-linked (GlcNAc...) asparagine).

It belongs to the peptidase M35 family. Zn(2+) serves as cofactor.

The protein resides in the secreted. It carries out the reaction Preferential cleavage of bonds with hydrophobic residues in P1'. Also 3-Asn-|-Gln-4 and 8-Gly-|-Ser-9 bonds in insulin B chain.. Functionally, secreted metalloproteinase that allows assimilation of proteinaceous substrates. Shows high activities on basic nuclear substrates such as histone and protamine. May be involved in virulence. The polypeptide is Neutral protease 2 homolog mep20 (mep20) (Aspergillus fumigatus (Neosartorya fumigata)).